A 404-amino-acid polypeptide reads, in one-letter code: Demethylphylloquinone reductase NdbB (404 aa).

7–43 serves as a coordination point for FAD; that stretch reads RICILGGGFGGLYTALRLGQLSWEGHTPPEIVLVDQR. 159–195 is an NADP(+) binding site; the sequence is IRIAIVGGGYSGVELAAKLGDRLGERGRIRIIERGKE.

The protein belongs to the NADH dehydrogenase family. It depends on FAD as a cofactor.

The catalysed reaction is demethylphylloquinone + NADPH + H(+) = demethylphylloquinol + NADP(+). It participates in cofactor biosynthesis; phylloquinone biosynthesis. Its activity is regulated as follows. Inhibited by dicumarol. Its function is as follows. Bifunctional oxidoreductase probably ables to act both on prenyl naphthoquinones and on prenyl benzoquinones. Catalyzes the penultimate step in the biosynthesis of vitamin K1. The chain is Demethylphylloquinone reductase NdbB from Synechocystis sp. (strain ATCC 27184 / PCC 6803 / Kazusa).